Here is a 182-residue protein sequence, read N- to C-terminus: Vacuolar protein sorting-associated protein 29 (182 aa).

K50 is modified (N6-acetyllysine).

The protein belongs to the VPS29 family. As to quaternary structure, component of the commander complex consisting of the CCC subcomplex and the retriever subcomplex. Component of the heterotrimeric retriever complex formed by VPS26C, VPS29 and VPS35L; within the complex interacts with VPS35L. Component of the heterotrimeric retromer cargo-selective complex (CSC), also described as vacuolar protein sorting subcomplex (VPS), formed by VPS26 (VPS26A or VPS26B), VPS29 and VPS35. The CSC has a highly elongated structure with VPS26 and VPS29 binding independently at opposite distal ends of VPS35 as central platform. The CSC is believed to associate with variable sorting nexins to form functionally distinct retromer complex variants. The originally described retromer complex (also called SNX-BAR retromer) is a pentamer containing the CSC and a heterodimeric membrane-deforming subcomplex formed between SNX1 or SNX2 and SNX5 or SNX6 (also called SNX-BAR subcomplex); the respective CSC and SNX-BAR subcomplexes associate with low affinity. The CSC associates with SNX3 to form a SNX3-retromer complex. The CSC associates with SNX27, the WASH complex and the SNX-BAR subcomplex to form the SNX27-retromer complex. Interacts with VPS26A, VPS35, SNX1, SNX2, SNX3, SNX27, WASHC5. Interacts with TBC1D5; this interaction is blocked by VPS35L in the retriever complex. Interacts with SNX17; the interaction is indirect; SNX17 (via its C-terminus) interacts with the retriever complex (via VPS26C and VPS35L). Interacts with VPS26B and ANKRD27.

Its subcellular location is the cytoplasm. It localises to the membrane. The protein localises to the endosome membrane. It is found in the early endosome. The protein resides in the late endosome. Component of the commander complex that is essential for endosomal recycling of transmembrane cargos; the commander complex is composed of the CCC subcomplex and the retriever subcomplex. Component of the retriever complex, which is a heterotrimeric complex related to retromer cargo-selective complex (CSC) and essential for retromer-independent retrieval and recycling of numerous cargos such as integrin alpha-5/beta-1 (ITGA5:ITGB1). Component of the retromer cargo-selective complex (CSC). The CSC is believed to be the core functional component of retromer or respective retromer complex variants acting to prevent missorting of selected transmembrane cargo proteins into the lysosomal degradation pathway. The recruitment of the CSC to the endosomal membrane involves RAB7A and SNX3. The SNX-BAR retromer mediates retrograde transport of cargo proteins from endosomes to the trans-Golgi network (TGN) and is involved in endosome-to-plasma membrane transport for cargo protein recycling. The SNX3-retromer mediates the retrograde endosome-to-TGN transport of WLS distinct from the SNX-BAR retromer pathway. The SNX27-retromer is believed to be involved in endosome-to-plasma membrane trafficking and recycling of a broad spectrum of cargo proteins. The CSC seems to act as recruitment hub for other proteins, such as the WASH complex and TBC1D5. Required to regulate transcytosis of the polymeric immunoglobulin receptor (pIgR-pIgA). In the endosomes, retriever complex drives the retrieval and recycling of NxxY-motif-containing cargo proteins by coupling to SNX17, a cargo essential for the homeostatic maintenance of numerous cell surface proteins associated with processes that include cell migration, cell adhesion, nutrient supply and cell signaling. The recruitment of the retriever complex to the endosomal membrane involves CCC and WASH complexes. Involved in GLUT1 endosome-to-plasma membrane trafficking; the function is dependent of association with ANKRD27. The sequence is that of Vacuolar protein sorting-associated protein 29 from Rattus norvegicus (Rat).